Reading from the N-terminus, the 456-residue chain is RNA polymerase II-associated protein 1 homolog (456 aa).

The segment at 382-456 (LRSVEGSLNE…PVEQLQNEED (75 aa)) is disordered. At Ser388 the chain carries Phosphoserine. Basic and acidic residues predominate over residues 396–406 (EEKPAESREQL). Composition is skewed to polar residues over residues 408–433 (SAEQTNGVKPETQAQNMSASESQANS) and 441–456 (GNTQPSPVEQLQNEED).

This sequence belongs to the PAF1 family.

It is found in the cytoplasm. The protein resides in the nucleus. In Schizosaccharomyces pombe (strain 972 / ATCC 24843) (Fission yeast), this protein is RNA polymerase II-associated protein 1 homolog.